The chain runs to 386 residues: MKTAVHFGAGNIGRGFIGLLLYQSGYQTIFIDVNNQVIDEINKQKSYHVYLAGKEKQELTVNHITGINSIKEPDAVTEAIVKADVVTTAVGPTILPVIAKAISKGLQERTKQNNSPLNIIACENMVGGSSLLKEHVFESLEAHKIGEFDRLYGFPDAAVDRIVPNQTNKNLLDVMVEPYYEWVVEKKKIVGEVPPIFGITYVDDLAPYIERKLFTVNTGHAIPAYLGTHLGYDTIVEAMKDLRIDDTIYGALAESGEALIHAYGFNREMHQEYVSKIIQRFQNPYISDDVKRVARGPIRKLGAKDRLVKPALMYIEYTGKIPVYLAKTIAAALLFNNDEDREAIELQKKISATGYQQAFVEVSGCDSDSILTKKVIEQLRLLQNKK.

4-15 lines the NAD(+) pocket; it reads AVHFGAGNIGRG.

Belongs to the mannitol dehydrogenase family.

It carries out the reaction D-mannitol 1-phosphate + NAD(+) = beta-D-fructose 6-phosphate + NADH + H(+). The sequence is that of Mannitol-1-phosphate 5-dehydrogenase from Oceanobacillus iheyensis (strain DSM 14371 / CIP 107618 / JCM 11309 / KCTC 3954 / HTE831).